The sequence spans 62 residues: UPF0337 protein XCC0070 (62 aa).

A disordered region spans residues 32–62 (LEGAAEKNIGKVQRKAGELADDVRDATKSTR).

This sequence belongs to the UPF0337 (CsbD) family.

This is UPF0337 protein XCC0070 from Xanthomonas campestris pv. campestris (strain ATCC 33913 / DSM 3586 / NCPPB 528 / LMG 568 / P 25).